The sequence spans 137 residues: Envelope glycoprotein L (137 aa).

Residues 1 to 25 (MRTVGVFLATCLVTIFVLPTWGNWA) form the signal peptide. The interaction with gH stretch occupies residues 23 to 128 (NWAYPCCHVT…SVEDLFGANL (106 aa)). Disulfide bonds link Cys-28–Cys-56 and Cys-29–Cys-79.

Belongs to the herpesviridae glycoprotein L family. In terms of assembly, interacts with glycoprotein H (gH); this interaction is necessary for the correct processing and cell surface expression of gH. The heterodimer gH/gL seems to interact with gB trimers during fusion. The heterodimer gH/gL interacts with host EPHA2 to facilitate virus internalization and fusion.

It localises to the virion membrane. The protein localises to the host cell membrane. It is found in the host Golgi apparatus. Its subcellular location is the host trans-Golgi network. The heterodimer glycoprotein H-glycoprotein L is required for the fusion of viral and plasma membranes leading to virus entry into the host cell. Acts as a functional inhibitor of gH and maintains gH in an inhibited form. Upon binding to host integrins, gL dissociates from gH leading to activation of the viral fusion glycoproteins gB and gH. The heterodimer gH/gL targets also host EPHA2 to promote viral entry. In Epstein-Barr virus (strain AG876) (HHV-4), this protein is Envelope glycoprotein L.